We begin with the raw amino-acid sequence, 197 residues long: Endonuclease V (197 aa).

Residues Asp37 and Glu101 each coordinate Mg(2+).

Belongs to the endonuclease V family. The cofactor is Mg(2+).

It localises to the cytoplasm. The catalysed reaction is Endonucleolytic cleavage at apurinic or apyrimidinic sites to products with a 5'-phosphate.. DNA repair enzyme involved in the repair of deaminated bases. Selectively cleaves double-stranded DNA at the second phosphodiester bond 3' to a deoxyinosine leaving behind the intact lesion on the nicked DNA. This Thermococcus kodakarensis (strain ATCC BAA-918 / JCM 12380 / KOD1) (Pyrococcus kodakaraensis (strain KOD1)) protein is Endonuclease V.